Here is a 1366-residue protein sequence, read N- to C-terminus: DNA-directed RNA polymerase subunit beta' (1366 aa).

The segment at Met-1–Arg-40 is disordered. Over residues Lys-7–Lys-24 the composition is skewed to basic residues. Polar residues predominate over residues Gln-25 to Ser-38. Cys-250, Cys-317, Cys-324, and Cys-327 together coordinate Zn(2+). Residues Thr-1299–Glu-1366 are disordered. A compositionally biased stretch (low complexity) spans Ala-1353–Glu-1366.

This sequence belongs to the RNA polymerase beta' chain family. RpoC2 subfamily. As to quaternary structure, in cyanobacteria the RNAP catalytic core is composed of 2 alpha, 1 beta, 1 beta', 1 gamma and 1 omega subunit. When a sigma factor is associated with the core the holoenzyme is formed, which can initiate transcription. Requires Zn(2+) as cofactor.

The catalysed reaction is RNA(n) + a ribonucleoside 5'-triphosphate = RNA(n+1) + diphosphate. DNA-dependent RNA polymerase catalyzes the transcription of DNA into RNA using the four ribonucleoside triphosphates as substrates. This chain is DNA-directed RNA polymerase subunit beta', found in Prochlorococcus marinus (strain MIT 9211).